Consider the following 511-residue polypeptide: Bifunctional purine biosynthesis protein PurH (511 aa).

In terms of domain architecture, MGS-like spans Met-1–Val-145.

This sequence belongs to the PurH family.

It catalyses the reaction (6R)-10-formyltetrahydrofolate + 5-amino-1-(5-phospho-beta-D-ribosyl)imidazole-4-carboxamide = 5-formamido-1-(5-phospho-D-ribosyl)imidazole-4-carboxamide + (6S)-5,6,7,8-tetrahydrofolate. The enzyme catalyses IMP + H2O = 5-formamido-1-(5-phospho-D-ribosyl)imidazole-4-carboxamide. It participates in purine metabolism; IMP biosynthesis via de novo pathway; 5-formamido-1-(5-phospho-D-ribosyl)imidazole-4-carboxamide from 5-amino-1-(5-phospho-D-ribosyl)imidazole-4-carboxamide (10-formyl THF route): step 1/1. It functions in the pathway purine metabolism; IMP biosynthesis via de novo pathway; IMP from 5-formamido-1-(5-phospho-D-ribosyl)imidazole-4-carboxamide: step 1/1. The chain is Bifunctional purine biosynthesis protein PurH from Bacillus thuringiensis subsp. konkukian (strain 97-27).